The sequence spans 362 residues: Methylthioribose-1-phosphate isomerase (362 aa).

Asp-252 acts as the Proton donor in catalysis.

The protein belongs to the eIF-2B alpha/beta/delta subunits family. MtnA subfamily.

The protein resides in the cytoplasm. Its subcellular location is the nucleus. It carries out the reaction 5-(methylsulfanyl)-alpha-D-ribose 1-phosphate = 5-(methylsulfanyl)-D-ribulose 1-phosphate. Its pathway is amino-acid biosynthesis; L-methionine biosynthesis via salvage pathway; L-methionine from S-methyl-5-thio-alpha-D-ribose 1-phosphate: step 1/6. In terms of biological role, catalyzes the interconversion of methylthioribose-1-phosphate (MTR-1-P) into methylthioribulose-1-phosphate (MTRu-1-P). The sequence is that of Methylthioribose-1-phosphate isomerase from Drosophila virilis (Fruit fly).